The following is a 129-amino-acid chain: HTH-type transcriptional regulator HmrR (129 aa).

Positions 1 to 68 (MNIGEASERS…VEECRQLLAL (68 aa)) constitute an HTH merR-type domain. The segment at residues 4–23 (GEASERSGLPSKTIRYYEDI) is a DNA-binding region (H-T-H motif).

As to quaternary structure, homodimer.

The protein resides in the cytoplasm. Regulates the transcription of actP. It detects cytoplasmic copper stress and activates transcription in response to increasing copper concentrations. In the absence of copper, it negatively regulates the transcription of actP. This is HTH-type transcriptional regulator HmrR (hmrR) from Rhizobium leguminosarum bv. viciae.